The primary structure comprises 502 residues: Glutamate--tRNA ligase (502 aa).

The 'HIGH' region signature appears at 21–31 (PSPTGVPHVGM). The short motif at 265–269 (KLSKR) is the 'KMSKS' region element. Lysine 268 contributes to the ATP binding site.

It belongs to the class-I aminoacyl-tRNA synthetase family. Glutamate--tRNA ligase type 1 subfamily. Monomer.

The protein localises to the cytoplasm. The enzyme catalyses tRNA(Glu) + L-glutamate + ATP = L-glutamyl-tRNA(Glu) + AMP + diphosphate. In terms of biological role, catalyzes the attachment of glutamate to tRNA(Glu) in a two-step reaction: glutamate is first activated by ATP to form Glu-AMP and then transferred to the acceptor end of tRNA(Glu). The protein is Glutamate--tRNA ligase of Mycobacterium leprae (strain TN).